The sequence spans 123 residues: Small ribosomal subunit protein bS18 (123 aa).

Polar residues predominate over residues 1 to 10; the sequence is MADETTVSTP. The disordered stretch occupies residues 1–52; the sequence is MADETTVSTPAASGTETPSTGGGGAPQGRPQGGPRGDRGPRPGGSGRDGGRK. Residues 20 to 34 are compositionally biased toward gly residues; sequence TGGGGAPQGRPQGGP.

This sequence belongs to the bacterial ribosomal protein bS18 family. As to quaternary structure, part of the 30S ribosomal subunit. Forms a tight heterodimer with protein bS6.

Its function is as follows. Binds as a heterodimer with protein bS6 to the central domain of the 16S rRNA, where it helps stabilize the platform of the 30S subunit. The protein is Small ribosomal subunit protein bS18 of Koribacter versatilis (strain Ellin345).